Consider the following 625-residue polypeptide: MLPLHLVHVLYPIGLIANLFFGSAFTIQWFLSERRKKACVPKSFWILSSIGAVMMIAHGFIQSQFPIALLHGANLVIYFRNLNVSSSHSLSLRATLFILVVTLLLTTLPFVLGSYYYPNMQWMASPNIFHLPLPPPNIYWHIAGCIGLFTFSSRFFIQWCHLEINNRSTLPALFWLVSFIGGFLAFLYFIRTGDPVNIISYGCGLLPSLANLLIIYKKSRLPEFHNHSYFLSAGEPSGDILGSDLLHNIKTCDPTIRCFGVGGPLMRKEGFEPLIHMEEFQVSGFLEVFFSIFGLFKKYRRLYKAILQENPETVFCIDFPDFHFFLIKKLRKCGYKGKIIHYVCPSIWAWRPKRKKILEKYLDTLLLILPFEKDLFINSPLKTIYLGHPLVKTISNFQYCSSWKQQLSISDQPIVALFPGSRPGDIFRNLQVQIRAFLASSLAQSHQILVSSCNPKYDKNILDVLEKEGCRGKIISSTFRYQLMRDCDCALAKCGTIVLEAALNQTPTIVTCLLGPIDTFLAKYIFKILMPAYSLPNIITGSIIFPEFIGGKHDFNPEEVAAAIDILAKPKSKEKQKLACQQLLDTLMTNVVTPEECLRIICSQNSHLHLEKGILKNLHPRDSSV.

A unknown region spans residues 1 to 224; the sequence is MLPLHLVHVL…IYKKSRLPEF (224 aa). Residues 225–625 are lipid-A-disaccharide synthase; that stretch reads HNHSYFLSAG…KNLHPRDSSV (401 aa).

In the C-terminal section; belongs to the LpxB family.

The catalysed reaction is a lipid X + a UDP-2-N,3-O-bis[(3R)-3-hydroxyacyl]-alpha-D-glucosamine = a lipid A disaccharide + UDP + H(+). It functions in the pathway bacterial outer membrane biogenesis; LPS lipid A biosynthesis. Condensation of UDP-2,3-diacylglucosamine and 2,3-diacylglucosamine-1-phosphate to form lipid A disaccharide, a precursor of lipid A, a phosphorylated glycolipid that anchors the lipopolysaccharide to the outer membrane of the cell. This chain is Lipid-A-disaccharide synthase (lpxB), found in Chlamydia felis (strain Fe/C-56) (Chlamydophila felis).